A 461-amino-acid polypeptide reads, in one-letter code: V-type ATP synthase beta chain (461 aa).

Belongs to the ATPase alpha/beta chains family.

In terms of biological role, produces ATP from ADP in the presence of a proton gradient across the membrane. The V-type beta chain is a regulatory subunit. This is V-type ATP synthase beta chain from Streptococcus pneumoniae serotype 19F (strain G54).